The sequence spans 272 residues: MSQPILVFDSGIGGLSVLAEIRKLLPHHNYCYLFDNARLPYGELEEQELISGCVALIDQVVERTHAAIVVVACNTASTVVLPALRATLSIPVVGVVPAIKPAAQLSKSKRIGLLATPGTVKRHYTYELISQFADDCHVELFGSSELVLMAEQKIATGQLDMARLAQVLSPIVEADLDVLVLGCTHFPMLRDELQQVLGKGVTLLDSGEAIAKRVKTLLAETKSEQQVQEDANRDSVMQAFYTKAEISEGLASMLVDCGFSTLERITTINSNR.

Substrate-binding positions include 9–10 (DS) and 41–42 (YG). The Proton donor/acceptor role is filled by C73. 74-75 (NT) lines the substrate pocket. The Proton donor/acceptor role is filled by C183. A substrate-binding site is contributed by 184–185 (TH).

This sequence belongs to the aspartate/glutamate racemases family.

It catalyses the reaction L-glutamate = D-glutamate. It participates in cell wall biogenesis; peptidoglycan biosynthesis. Functionally, provides the (R)-glutamate required for cell wall biosynthesis. The sequence is that of Glutamate racemase from Shewanella sp. (strain MR-7).